The primary structure comprises 427 residues: Inorganic pyrophosphatase 1 (427 aa).

Residues 36-52 (SSSSNTATTSTSSSNTS) are compositionally biased toward low complexity. Disordered stretches follow at residues 36–63 (SSSS…TSRP) and 77–118 (SMDS…RSLH). Composition is skewed to polar residues over residues 53 to 63 (QKWATSRTSRP) and 77 to 114 (SMDS…ANSE). Residues aspartate 259, aspartate 264, and aspartate 296 each contribute to the Mg(2+) site.

The protein belongs to the PPase family. Mg(2+) is required as a cofactor. Expressed in coelomocytes, the intestine and in the nervous system including the nerve cords and sensory neurons.

It is found in the cytoplasm. It catalyses the reaction diphosphate + H2O = 2 phosphate + H(+). Catalyzes the hydrolysis of inorganic pyrophosphate (PPi) forming two phosphate ions. Plays a role in intestinal development and subsequent normal secretory, digestive and absorption functions. Required for larval development. This chain is Inorganic pyrophosphatase 1, found in Caenorhabditis elegans.